The sequence spans 517 residues: Splicing factor cactin (517 aa).

A compositionally biased stretch (basic and acidic residues) spans M1–R14. Residues M1–K59 form a disordered region. The segment covering R22–S32 has biased composition (low complexity). Basic and acidic residues predominate over residues R44–K59.

It belongs to the CACTIN family. In terms of assembly, interacts with sde2. Interacts with cdc5.

In terms of biological role, plays a role in pre-mRNA splicing by facilitating excision of introns featuring long spacing between the branchpoint and 3'-splice site (ss). Recruited to the spliceosome by sde2, which may enable folding of the RNA between the BP and 3'-ss to guide the splice site towards the spliceosome's catalytic center. Assists the splicing of several components involved in chromatin organization. The protein is Splicing factor cactin of Schizosaccharomyces pombe (strain 972 / ATCC 24843) (Fission yeast).